Here is a 480-residue protein sequence, read N- to C-terminus: NADH-quinone oxidoreductase subunit N (480 aa).

Helical transmembrane passes span 11–31 (VIPE…DLFV), 38–58 (ITYG…IALA), 74–94 (GLSD…FLYS), 109–129 (YVLG…YSFL), 163–183 (FILG…LYGI), 200–220 (GAGL…GLAF), 239–259 (PTSV…AIIM), 273–293 (WQGM…VVAI), 301–321 (MLAY…LAGT), 329–349 (LFYT…IILL), 372–392 (FAFI…TVGF), 405–425 (VEMI…AFYY), and 451–471 (VVLS…GLLM).

Belongs to the complex I subunit 2 family. In terms of assembly, NDH-1 is composed of 14 different subunits. Subunits NuoA, H, J, K, L, M, N constitute the membrane sector of the complex.

Its subcellular location is the cell inner membrane. The enzyme catalyses a quinone + NADH + 5 H(+)(in) = a quinol + NAD(+) + 4 H(+)(out). Its function is as follows. NDH-1 shuttles electrons from NADH, via FMN and iron-sulfur (Fe-S) centers, to quinones in the respiratory chain. The immediate electron acceptor for the enzyme in this species is believed to be ubiquinone. Couples the redox reaction to proton translocation (for every two electrons transferred, four hydrogen ions are translocated across the cytoplasmic membrane), and thus conserves the redox energy in a proton gradient. The polypeptide is NADH-quinone oxidoreductase subunit N (Thioalkalivibrio sulfidiphilus (strain HL-EbGR7)).